Consider the following 428-residue polypeptide: Trigger factor (428 aa).

One can recognise a PPIase FKBP-type domain in the interval 163-248 (GNIAVIDFKG…VKEIKVKELP (86 aa)).

It belongs to the FKBP-type PPIase family. Tig subfamily.

It is found in the cytoplasm. The enzyme catalyses [protein]-peptidylproline (omega=180) = [protein]-peptidylproline (omega=0). Its function is as follows. Involved in protein export. Acts as a chaperone by maintaining the newly synthesized protein in an open conformation. Functions as a peptidyl-prolyl cis-trans isomerase. This Clostridium perfringens (strain ATCC 13124 / DSM 756 / JCM 1290 / NCIMB 6125 / NCTC 8237 / Type A) protein is Trigger factor.